Consider the following 440-residue polypeptide: GTPase Der (440 aa).

2 consecutive EngA-type G domains span residues P4–K168 and I177–A352. GTP contacts are provided by residues G10–S17, D57–I61, N120–D123, G183–S190, D230–L234, and N295–D298. The KH-like domain occupies M353–S437.

Belongs to the TRAFAC class TrmE-Era-EngA-EngB-Septin-like GTPase superfamily. EngA (Der) GTPase family. As to quaternary structure, associates with the 50S ribosomal subunit.

Its function is as follows. GTPase that plays an essential role in the late steps of ribosome biogenesis. In Alkaliphilus metalliredigens (strain QYMF), this protein is GTPase Der.